The chain runs to 149 residues: Calmodulin (149 aa).

Ala-2 carries the N-acetylalanine modification. 4 consecutive EF-hand domains span residues 8 to 43 (EQISEFKEAFSLFDKDGDGTITTKELGTVMRSLGQN), 44 to 79 (PTEAELQDMINEVDADGNGTIDFPEFLTMMARKMRD), 81 to 116 (DSEEEIKEAFKVFDKDGNGYISAAELRHVMTNLGEK), and 117 to 149 (LTDNEVDEMIREADVDGDGQINYEEFVKMMLSK). Asp-21, Asp-23, Asp-25, Thr-27, Glu-32, Asp-57, Asp-59, Asn-61, Thr-63, Glu-68, Asp-94, Asp-96, Asn-98, Tyr-100, Glu-105, Asp-130, Asp-132, Asp-134, Gln-136, and Glu-141 together coordinate Ca(2+).

It belongs to the calmodulin family.

Functionally, calmodulin mediates the control of a large number of enzymes, ion channels and other proteins by Ca(2+). Among the enzymes to be stimulated by the calmodulin-Ca(2+) complex are a number of protein kinases and phosphatases. The chain is Calmodulin (CMD1) from Pleurotus ostreatus (Oyster mushroom).